The chain runs to 397 residues: Bifunctional enzyme IspD/IspF (397 aa).

A 2-C-methyl-D-erythritol 4-phosphate cytidylyltransferase region spans residues 1-233 (MCAKKYKIAA…KLLFEEPKFR (233 aa)). The interval 233-397 (RVGAGYDIHK…VLLHTNFYWK (165 aa)) is 2-C-methyl-D-erythritol 2,4-cyclodiphosphate synthase. A divalent metal cation contacts are provided by aspartate 239 and histidine 241. Residues 239-241 (DIH) and 270-271 (HS) each bind 4-CDP-2-C-methyl-D-erythritol 2-phosphate. Histidine 278 contacts a divalent metal cation. Residues 292 to 294 (DIG), 368 to 371 (TTAE), tyrosine 375, and arginine 378 each bind 4-CDP-2-C-methyl-D-erythritol 2-phosphate.

In the N-terminal section; belongs to the IspD/TarI cytidylyltransferase family. IspD subfamily. It in the C-terminal section; belongs to the IspF family. A divalent metal cation is required as a cofactor.

The enzyme catalyses 2-C-methyl-D-erythritol 4-phosphate + CTP + H(+) = 4-CDP-2-C-methyl-D-erythritol + diphosphate. It carries out the reaction 4-CDP-2-C-methyl-D-erythritol 2-phosphate = 2-C-methyl-D-erythritol 2,4-cyclic diphosphate + CMP. It functions in the pathway isoprenoid biosynthesis; isopentenyl diphosphate biosynthesis via DXP pathway; isopentenyl diphosphate from 1-deoxy-D-xylulose 5-phosphate: step 2/6. Its pathway is isoprenoid biosynthesis; isopentenyl diphosphate biosynthesis via DXP pathway; isopentenyl diphosphate from 1-deoxy-D-xylulose 5-phosphate: step 4/6. Its function is as follows. Bifunctional enzyme that catalyzes the formation of 4-diphosphocytidyl-2-C-methyl-D-erythritol from CTP and 2-C-methyl-D-erythritol 4-phosphate (MEP) (IspD), and catalyzes the conversion of 4-diphosphocytidyl-2-C-methyl-D-erythritol 2-phosphate (CDP-ME2P) to 2-C-methyl-D-erythritol 2,4-cyclodiphosphate (ME-CPP) with a corresponding release of cytidine 5-monophosphate (CMP) (IspF). The polypeptide is Bifunctional enzyme IspD/IspF (Wolbachia pipientis wMel).